Consider the following 420-residue polypeptide: Riboflavin biosynthesis protein RibBA (420 aa).

The segment at 1–202 is DHBP synthase; it reads MTTFGTIEQA…IADLVAYRRR (202 aa). D-ribulose 5-phosphate-binding positions include 28–29, aspartate 33, 141–145, and glutamate 165; these read RE and RPGHT. Glutamate 29 is a binding site for Mg(2+). Position 144 (histidine 144) interacts with Mg(2+). A GTP cyclohydrolase II region spans residues 203–420; sequence TEKQVELVAE…RAVVGDGIGA (218 aa). GTP is bound at residue 253–257; sequence RVHSE. Zn(2+) contacts are provided by cysteine 258, cysteine 269, and cysteine 271. GTP is bound by residues glutamine 274, 297–299, and threonine 319; that span reads EGR. Aspartate 331 (proton acceptor; for GTP cyclohydrolase activity) is an active-site residue. The active-site Nucleophile; for GTP cyclohydrolase activity is arginine 333. Residues threonine 354 and lysine 359 each coordinate GTP.

In the N-terminal section; belongs to the DHBP synthase family. It in the C-terminal section; belongs to the GTP cyclohydrolase II family. It depends on Mg(2+) as a cofactor. Mn(2+) serves as cofactor. Zn(2+) is required as a cofactor.

It catalyses the reaction D-ribulose 5-phosphate = (2S)-2-hydroxy-3-oxobutyl phosphate + formate + H(+). The catalysed reaction is GTP + 4 H2O = 2,5-diamino-6-hydroxy-4-(5-phosphoribosylamino)-pyrimidine + formate + 2 phosphate + 3 H(+). Its pathway is cofactor biosynthesis; riboflavin biosynthesis; 2-hydroxy-3-oxobutyl phosphate from D-ribulose 5-phosphate: step 1/1. The protein operates within cofactor biosynthesis; riboflavin biosynthesis; 5-amino-6-(D-ribitylamino)uracil from GTP: step 1/4. In terms of biological role, catalyzes the conversion of D-ribulose 5-phosphate to formate and 3,4-dihydroxy-2-butanone 4-phosphate. Functionally, catalyzes the conversion of GTP to 2,5-diamino-6-ribosylamino-4(3H)-pyrimidinone 5'-phosphate (DARP), formate and pyrophosphate. In Salinispora arenicola (strain CNS-205), this protein is Riboflavin biosynthesis protein RibBA.